The following is a 164-amino-acid chain: 17.8 kDa class II heat shock protein (164 aa).

The 117-residue stretch at 48–164 (DARAMAATPA…KPKTIEVKVA (117 aa)) folds into the sHSP domain.

The protein belongs to the small heat shock protein (HSP20) family.

It is found in the cytoplasm. This chain is 17.8 kDa class II heat shock protein, found in Zea mays (Maize).